A 262-amino-acid polypeptide reads, in one-letter code: Thioredoxin-like protein HCF164, chloroplastic (262 aa).

The N-terminal 54 residues, 1-54, are a transit peptide targeting the chloroplast; the sequence is MAVVASRCTGLLLPDLGASLAGFRRRRSTPASSLSFRPRRARRRLGSLSCIAPP. The interval 47 to 90 is disordered; the sequence is SLSCIAPPDSAEPQTDEPAAKDDSTEDKAEASSASQDAGNPTFP. Basic and acidic residues predominate over residues 64–76; the sequence is PAAKDDSTEDKAE. Over residues 78–89 the composition is skewed to polar residues; the sequence is SSASQDAGNPTF. Residues 78–230 form the Thioredoxin domain; the sequence is SSASQDAGNP…FLDNVVALAS (153 aa). Residues Cys151 and Cys154 each act as nucleophile in the active site. Cys151 and Cys154 are joined by a disulfide.

This sequence belongs to the thioredoxin family.

Its subcellular location is the plastid. The protein localises to the chloroplast. Its function is as follows. Probable thiol-disulfide oxidoreductase that may participate in various redox reactions in the chloroplast. This chain is Thioredoxin-like protein HCF164, chloroplastic, found in Oryza sativa subsp. japonica (Rice).